Here is a 444-residue protein sequence, read N- to C-terminus: Tol-Pal system protein TolB (444 aa).

The signal sequence occupies residues 1–19 (MRNIIYFILSLLFSVTSYA).

This sequence belongs to the TolB family. As to quaternary structure, the Tol-Pal system is composed of five core proteins: the inner membrane proteins TolA, TolQ and TolR, the periplasmic protein TolB and the outer membrane protein Pal. They form a network linking the inner and outer membranes and the peptidoglycan layer.

Its subcellular location is the periplasm. Functionally, part of the Tol-Pal system, which plays a role in outer membrane invagination during cell division and is important for maintaining outer membrane integrity. The sequence is that of Tol-Pal system protein TolB from Rickettsia conorii (strain ATCC VR-613 / Malish 7).